Reading from the N-terminus, the 932-residue chain is Protein translocase subunit SecA (932 aa).

Residues glutamine 87, 105 to 109, and aspartate 515 contribute to the ATP site; that span reads GEGKT. Residues cysteine 916, cysteine 918, cysteine 927, and histidine 928 each coordinate Zn(2+).

This sequence belongs to the SecA family. As to quaternary structure, monomer and homodimer. Part of the essential Sec protein translocation apparatus which comprises SecA, SecYEG and auxiliary proteins SecDF-YajC and YidC. Zn(2+) serves as cofactor.

The protein resides in the cell inner membrane. It localises to the cytoplasm. The enzyme catalyses ATP + H2O + cellular proteinSide 1 = ADP + phosphate + cellular proteinSide 2.. Its function is as follows. Part of the Sec protein translocase complex. Interacts with the SecYEG preprotein conducting channel. Has a central role in coupling the hydrolysis of ATP to the transfer of proteins into and across the cell membrane, serving both as a receptor for the preprotein-SecB complex and as an ATP-driven molecular motor driving the stepwise translocation of polypeptide chains across the membrane. The sequence is that of Protein translocase subunit SecA from Burkholderia lata (strain ATCC 17760 / DSM 23089 / LMG 22485 / NCIMB 9086 / R18194 / 383).